A 364-amino-acid polypeptide reads, in one-letter code: MAQELMFEEPRRGKPPRHLADFDAEGRASAVAALGLPPFRAKQLAHQYYGRLIADPRQMTDLPAAVREQIAETMFPNLLTAAREVTCDAGQTRKTLWRATDGVTLESVLMRYPQRNTVCISSQAGCGMACPFCATGQGGLTRNLSTAEILEQVRAAAAALRDEFGDRLSNVVFMGMGEPLANYARVLAAVRRITEPPPMGFGISARSVTVSTVGLAPAIRKLADERLGVTLALSLHAPDDELRDTLVPVNNRWKISEALEAAHYYAEVTGRRVSVEYALIREVNDQPWRADLLGKRLHRALGPLVHVNLIPLNPTPGSDWDASPKPVEREFVKRVRAQGVSCTVRDTRGREISAACGQLAAEGG.

The active-site Proton acceptor is Glu106. The 239-residue stretch at 112–350 (YPQRNTVCIS…SCTVRDTRGR (239 aa)) folds into the Radical SAM core domain. An intrachain disulfide couples Cys119 to Cys356. Cys126, Cys130, and Cys133 together coordinate [4Fe-4S] cluster. Residues 177 to 178 (GE), Ser211, 234 to 236 (SLH), and Asn313 contribute to the S-adenosyl-L-methionine site. Cys356 serves as the catalytic S-methylcysteine intermediate.

The protein belongs to the radical SAM superfamily. RlmN family. The cofactor is [4Fe-4S] cluster.

Its subcellular location is the cytoplasm. The catalysed reaction is adenosine(2503) in 23S rRNA + 2 reduced [2Fe-2S]-[ferredoxin] + 2 S-adenosyl-L-methionine = 2-methyladenosine(2503) in 23S rRNA + 5'-deoxyadenosine + L-methionine + 2 oxidized [2Fe-2S]-[ferredoxin] + S-adenosyl-L-homocysteine. It carries out the reaction adenosine(37) in tRNA + 2 reduced [2Fe-2S]-[ferredoxin] + 2 S-adenosyl-L-methionine = 2-methyladenosine(37) in tRNA + 5'-deoxyadenosine + L-methionine + 2 oxidized [2Fe-2S]-[ferredoxin] + S-adenosyl-L-homocysteine. In terms of biological role, specifically methylates position 2 of adenine 2503 in 23S rRNA and position 2 of adenine 37 in tRNAs. The protein is Probable dual-specificity RNA methyltransferase RlmN of Mycobacterium marinum (strain ATCC BAA-535 / M).